Consider the following 85-residue polypeptide: U4-theraphotoxin-Hhn1a (85 aa).

The first 22 residues, 1 to 22 (MKMTLIAILTCAAVLVLHTTAA), serve as a signal peptide directing secretion. Residues 23–48 (EELEAESQLMEVGMPDTELAAVDEER) constitute a propeptide that is removed on maturation. Cystine bridges form between Cys-52/Cys-66, Cys-56/Cys-77, and Cys-71/Cys-82.

This sequence belongs to the neurotoxin 12 (Hwtx-2) family. 02 (Hwtx-2) subfamily. As to quaternary structure, monomer. Expressed by the venom gland.

Its subcellular location is the secreted. Its function is as follows. Neurotoxin active on both insects and mammals. The protein is U4-theraphotoxin-Hhn1a of Cyriopagopus hainanus (Chinese bird spider).